The primary structure comprises 36 residues: Photosystem I reaction center subunit VIII (36 aa).

A helical membrane pass occupies residues 7-29 (PSILVPLVGLVFPAITLASLFIY).

Belongs to the PsaI family.

It localises to the plastid. The protein resides in the chloroplast thylakoid membrane. In terms of biological role, may help in the organization of the PsaL subunit. This Anthoceros angustus (Hornwort) protein is Photosystem I reaction center subunit VIII.